Reading from the N-terminus, the 53-residue chain is Rubredoxin-1 (53 aa).

In terms of domain architecture, Rubredoxin-like spans 1–53 (MEKFVCDVCGYIYDPVVGDPDNGVAPGTKFKDIPDTWVCPLCKLDKTHFSKVE). The Fe cation site is built by Cys6, Cys9, Cys39, and Cys42.

This sequence belongs to the rubredoxin family. The cofactor is Fe(3+).

Functionally, rubredoxin is a small nonheme, iron protein lacking acid-labile sulfide. Its single Fe, chelated to 4 Cys, functions as an electron acceptor and may also stabilize the conformation of the molecule. The chain is Rubredoxin-1 (rubR1) from Clostridium perfringens (strain 13 / Type A).